Reading from the N-terminus, the 137-residue chain is Ribosome-binding factor A (137 aa).

It belongs to the RbfA family. In terms of assembly, monomer. Binds 30S ribosomal subunits, but not 50S ribosomal subunits or 70S ribosomes.

The protein localises to the cytoplasm. One of several proteins that assist in the late maturation steps of the functional core of the 30S ribosomal subunit. Associates with free 30S ribosomal subunits (but not with 30S subunits that are part of 70S ribosomes or polysomes). Required for efficient processing of 16S rRNA. May interact with the 5'-terminal helix region of 16S rRNA. This is Ribosome-binding factor A from Erwinia tasmaniensis (strain DSM 17950 / CFBP 7177 / CIP 109463 / NCPPB 4357 / Et1/99).